Here is a 141-residue protein sequence, read N- to C-terminus: Acetyltransferase YpeA (141 aa).

Residues 1-141 (MEIRVFRQED…GKRLIEDEEY (141 aa)) form the N-acetyltransferase domain.

It belongs to the acetyltransferase family. YpeA subfamily.

The sequence is that of Acetyltransferase YpeA from Shigella boydii serotype 4 (strain Sb227).